Reading from the N-terminus, the 539-residue chain is Glycine betaine transporter 2 (539 aa).

The next 12 helical transmembrane spans lie at 44 to 64 (LTNP…LLAL), 85 to 105 (FGAY…ALAF), 129 to 149 (IVLC…EPIA), 175 to 195 (FMHW…IVLM), 231 to 251 (CSII…GLQI), 265 to 285 (FITQ…SALS), 299 to 319 (IILS…SFII), 348 to 368 (WWTV…AIFI), 380 to 400 (LILS…SIVG), 426 to 446 (VLLA…LFLI), 480 to 500 (FWGL…SGGI), and 503 to 523 (LQSF…PSIL).

It belongs to the BCCT transporter (TC 2.A.15) family.

The protein localises to the cell inner membrane. Its function is as follows. Involved in the uptake of the osmoprotectant glycine betaine. The chain is Glycine betaine transporter 2 from Vibrio parahaemolyticus serotype O3:K6 (strain RIMD 2210633).